Here is a 1122-residue protein sequence, read N- to C-terminus: Desmoglein-2 (1122 aa).

The first 28 residues, 1–28 (MARSPGDRCALLLLVQLLAVVCLDFGNG), serve as a signal peptide directing secretion. Residues 29–54 (LHLEVFSPRNEGKPFPKHTHLVRQKR) constitute a propeptide that is removed on maturation. Cadherin domains follow at residues 55 to 164 (AWIT…EPVF), 165 to 277 (TQEV…IPVV), 278 to 398 (ENKM…SSVV), and 397 to 504 (VVSF…CPVL). Residues 55-618 (AWITAPVALR…YDNYVGLGPA (564 aa)) are Extracellular-facing. The N-linked (GlcNAc...) asparagine glycan is linked to Asn-117. N-linked (GlcNAc...) asparagine glycans are attached at residues Asn-314, Asn-467, and Asn-519. A helical membrane pass occupies residues 619 to 639 (AIALMILALLLLLLVPLLLLI). The Cytoplasmic portion of the chain corresponds to 640-1122 (CHCGGGAKGF…KHSTMQHSYS (483 aa)). 4 positions are modified to phosphoserine: Ser-685, Ser-706, Ser-709, and Ser-729. Thr-808 is subject to Phosphothreonine. Ser-810, Ser-814, and Ser-819 each carry phosphoserine. Desmoglein repeat repeat units lie at residues 885 to 916 (AYSS…ESSV), 917 to 945 (SSRQ…SYAK), 946 to 971 (GSAV…ERVY), 972 to 995 (APTS…ERVI), 996 to 1024 (QPNG…ERES), and 1025 to 1055 (ILAP…ERIL). Residues 913–932 (ESSVSSRQSQKVVPPPDPVA) form a disordered region. Over residues 914 to 924 (SSVSSRQSQKV) the composition is skewed to low complexity. The segment at 1089–1122 (LPNLDLEESDRPNSTITTSSTRVTKHSTMQHSYS) is disordered. Polar residues predominate over residues 1100-1122 (PNSTITTSSTRVTKHSTMQHSYS). Position 1122 is a phosphoserine (Ser-1122).

As to quaternary structure, interacts with PKP2. Interacts with CTNNB1; the interaction promotes localization of CTNNB1 at cell junctions thus reducing its nuclear localization and subsequent transcription of CTNNB1/TCF-target genes. In terms of processing, palmitoylated by ZDHHC5 at the plasma membrane. In terms of tissue distribution, expressed in undifferentiated pluripotent stem cells, expression decreases during differentiation (at protein level). Expressed by embryonic stem cells, expression is reduced during differentiation (at protein level). Expressed at the apical-lateral cell membrane of kidney tubular epithelial cells (at protein level). Expressed in epidermis and heart (at protein level). Expressed in the brain, spleen, lung, liver skeletal muscle, kidney and testis.

The protein resides in the cell membrane. It localises to the cell junction. Its subcellular location is the desmosome. The protein localises to the cytoplasm. Functionally, a component of desmosome cell-cell junctions which are required for positive regulation of cellular adhesion. Involved in the interaction of plaque proteins and intermediate filaments mediating cell-cell adhesion. Required for proliferation and viability of embryonic stem cells in the blastocyst, thereby crucial for progression of post-implantation embryonic development. Maintains pluripotency by regulating epithelial to mesenchymal transition/mesenchymal to epithelial transition (EMT/MET) via interacting with and sequestering CTNNB1 to sites of cell-cell contact, thereby reducing translocation of CTNNB1 to the nucleus and subsequent transcription of CTNNB1/TCF-target genes. Promotes pluripotency and the multi-lineage differentiation potential of hematopoietic stem cells. Plays a role in endothelial cell sprouting and elongation via mediating the junctional-association of cortical actin fibers and CDH5. Plays a role in limiting inflammatory infiltration and the apoptotic response to injury in kidney tubular epithelial cells, potentially via its role in maintaining cell-cell adhesion and the epithelial barrier. This is Desmoglein-2 (Dsg2) from Mus musculus (Mouse).